Consider the following 524-residue polypeptide: Apoptosis inhibitor 5 (524 aa).

The ARM-like and Heat-like helical repeats stretch occupies residues 2–360; that stretch reads PTVEELYRNY…HQLGRKLPDF (359 aa). Lysine 251 carries the N6-acetyllysine modification. Positions 370–391 are leucine-zipper; sequence LKDFKIRLQYFARGLQVYIRQL. Position 399 is a phosphothreonine (threonine 399). Residues 452–524 are disordered; the sequence is GQKRASEDTT…RGNRSRGRLY (73 aa). Positions 454-475 match the Nuclear localization signal motif; the sequence is KRASEDTTSGSPPKKSSAGPKR. Phosphoserine is present on residues serine 462, serine 464, and serine 469. Residues 462–472 show a composition bias toward low complexity; the sequence is SGSPPKKSSAG. Positions 487–497 are enriched in polar residues; it reads KYSSNLGNFNY. Omega-N-methylarginine is present on arginine 500.

It belongs to the API5 family. Monomer. Interacts with FGF2 and ACIN1. Post-translationally, acetylation at Lys-251 impairs antiapoptotic function. In terms of tissue distribution, expressed in all tissues tested, including heart, brain, placenta, lung, liver, skeletal muscle, kidney and pancreas. Highest levels in heart, pancreas and placenta. Highly expressed in several cancers. Preferentially expressed in squamous cell carcinoma versus adenocarcinoma in non-small cell lung cancer.

It is found in the nucleus. The protein resides in the cytoplasm. Antiapoptotic factor that may have a role in protein assembly. Negatively regulates ACIN1. By binding to ACIN1, it suppresses ACIN1 cleavage from CASP3 and ACIN1-mediated DNA fragmentation. Also known to efficiently suppress E2F1-induced apoptosis. Its depletion enhances the cytotoxic action of the chemotherapeutic drugs. The sequence is that of Apoptosis inhibitor 5 from Homo sapiens (Human).